A 118-amino-acid polypeptide reads, in one-letter code: Large ribosomal subunit protein bL19 (118 aa).

It belongs to the bacterial ribosomal protein bL19 family.

This protein is located at the 30S-50S ribosomal subunit interface and may play a role in the structure and function of the aminoacyl-tRNA binding site. The protein is Large ribosomal subunit protein bL19 of Geobacter metallireducens (strain ATCC 53774 / DSM 7210 / GS-15).